A 96-amino-acid polypeptide reads, in one-letter code: Protein C4 (96 aa).

Gly-2 carries N-myristoyl glycine; by host lipidation. The segment at 66 to 96 (STDDLQGEDSRQPMTLTPRQLTQDVSRRLLM) is disordered. The span at 77–89 (QPMTLTPRQLTQD) shows a compositional bias: polar residues.

Belongs to the geminiviridae protein AC4/C4 family.

It is found in the host cell membrane. Its function is as follows. Pathogenicity determinant. May act as a suppressor of RNA-mediated gene silencing, also known as post-transcriptional gene silencing (PTGS), a mechanism of plant viral defense that limits the accumulation of viral RNAs. This is Protein C4 from Solanum lycopersicum (Tomato).